The following is a 396-amino-acid chain: MHLLVHPNGSKYWRLQYRYEGKQKMLALGVYPEITLADARVRRDEARKLLANGVDPGDKKKNDKVEQSKARTFKEVAIEWHGTNKKWSEDHAHRVLKSLEDNLFAALGERNIAELKTRDLLAPIKAVEMSGRLEVAARLQQRTTAIMRYAVQSGLIDYNPAQEMAGAVASCNRQHRPALELKRIPELLTKIDSYTGRPLTRWAIELTLLIFIRSSELRFARWSEIDFEASIWTIPPEREPIPGVKHSHRGSKMRTTHLVPLSTQALAILKQIKQFYGAHDLIFIGDHDSHKPMSENTVNSALRVMGYDTKVEVCGHGFRTMACSSLVESGLWSRDAVERQMSHMARNSVRAAYIHKAEHLEERRLMLQWWADFLDVNRERFISPFEYAKINNPLKQ.

The region spanning 71–151 (RTFKEVAIEW…RTTAIMRYAV (81 aa)) is the Core-binding (CB) domain. The Tyr recombinase domain occupies 174 to 367 (QHRPALELKR…EHLEERRLML (194 aa)). Active-site residues include Arg213, Lys252, His316, Arg319, and His343. The active-site O-(3'-phospho-DNA)-tyrosine intermediate is Tyr353.

The protein belongs to the 'phage' integrase family.

The sequence is that of Putative protein IntB (intB) from Escherichia coli (strain K12).